The primary structure comprises 886 residues: Semaphorin-6B (886 aa).

A signal peptide spans 1 to 26 (MWTPRVPPPRPALSFFLLLLLGVTYG). At 27 to 605 (LFPEEPPPLS…VSVNLLVTSS (579 aa)) the chain is on the extracellular side. The 494-residue stretch at 32-525 (PPPLSVAPRD…FPRCVVRVPV (494 aa)) folds into the Sema domain. Asparagine 75 carries N-linked (GlcNAc...) asparagine glycosylation. Intrachain disulfides connect cysteine 117–cysteine 127 and cysteine 145–cysteine 154. Residues asparagine 156 and asparagine 292 are each glycosylated (N-linked (GlcNAc...) asparagine). 2 cysteine pairs are disulfide-bonded: cysteine 268-cysteine 379 and cysteine 293-cysteine 338. N-linked (GlcNAc...) asparagine glycans are attached at residues asparagine 387, asparagine 442, and asparagine 463. 4 cysteine pairs are disulfide-bonded: cysteine 487–cysteine 519, cysteine 528–cysteine 546, cysteine 534–cysteine 580, and cysteine 538–cysteine 554. A helical membrane pass occupies residues 606 to 626 (VAAFVVGAVVSGFSVGWFVGL). Residues 627 to 886 (RERRELARRK…TGERTAPPVP (260 aa)) are Cytoplasmic-facing. Disordered regions lie at residues 655–677 (RLGERRGTGPGGRGGAGGGPGGP), 697–731 (HGGPHDLDTGLLPTPEQTPLPQKRLPTPHPHAHAL), and 761–886 (EQPQ…PPVP). Positions 662–674 (TGPGGRGGAGGGP) are enriched in gly residues. Arginine 667 is modified (omega-N-methylarginine). A compositionally biased stretch (low complexity) spans 707-718 (LLPTPEQTPLPQ).

The protein belongs to the semaphorin family. As to quaternary structure, homodimer. Binds specifically the SH3 domain of the protooncogene C-SRC. In adulthood, it is expressed ubiquitously.

The protein resides in the cell membrane. Its function is as follows. Functions as a cell surface repellent for mossy fibers of developing neurons in the hippocampus where it plays a role in axon guidance. May function through the PLXNA4 receptor expressed by mossy cell axons. In Mus musculus (Mouse), this protein is Semaphorin-6B (Sema6b).